Reading from the N-terminus, the 681-residue chain is Probable L-type lectin-domain containing receptor kinase S.7 (681 aa).

A signal peptide spans Met1–Ser21. Residues Lys22–Asn305 are Extracellular-facing. Residues Asn30 to Lys265 are legume-lectin like. 7 N-linked (GlcNAc...) asparagine glycosylation sites follow: Asn32, Asn42, Asn86, Asn121, Asn135, Asn261, and Asn281. A helical transmembrane segment spans residues Leu306–Gly326. Residues Tyr327–Ser681 are Cytoplasmic-facing. Residues Phe365–Ile643 enclose the Protein kinase domain. Residues Ile371 to Val379 and Lys394 contribute to the ATP site. Asp493 serves as the catalytic Proton acceptor.

It in the C-terminal section; belongs to the protein kinase superfamily. Ser/Thr protein kinase family. In the N-terminal section; belongs to the leguminous lectin family.

The protein resides in the cell membrane. The enzyme catalyses L-seryl-[protein] + ATP = O-phospho-L-seryl-[protein] + ADP + H(+). It carries out the reaction L-threonyl-[protein] + ATP = O-phospho-L-threonyl-[protein] + ADP + H(+). Involved in resistance response to the pathogenic oomycetes Phytophthora infestans and Phytophthora capsici. The chain is Probable L-type lectin-domain containing receptor kinase S.7 from Arabidopsis thaliana (Mouse-ear cress).